A 447-amino-acid polypeptide reads, in one-letter code: Putative branched-chain amino acid carrier protein SE_1090 (447 aa).

A run of 12 helical transmembrane segments spans residues 5–25, 40–60, 74–94, 114–134, 143–163, 193–213, 229–249, 290–310, 317–337, 350–370, 382–402, and 417–437; these read TWII…LIFP, ILAF…VGAL, PRFS…LFAI, GNLA…YLCL, IGSL…IKGF, GYLT…VNAI, IIAG…LGYI, LLGI…IVSV, ILPK…SFIL, VPVL…ILIA, IPLI…QGWI, and LEWF…SYFV.

It belongs to the branched chain amino acid transporter family.

It localises to the cell membrane. Its function is as follows. Component of the transport system for branched-chain amino acids (leucine, isoleucine and valine), which is coupled to a proton motive force. The polypeptide is Putative branched-chain amino acid carrier protein SE_1090 (Staphylococcus epidermidis (strain ATCC 12228 / FDA PCI 1200)).